The following is a 366-amino-acid chain: G-protein coupled receptor 183 (366 aa).

Over 1–37 the chain is Extracellular; it reads MQVMRTFNQPPTSSHPTPTLNDSDTCITLYNHRGYAR. Asn21 carries an N-linked (GlcNAc...) asparagine glycan. The chain crosses the membrane as a helical span at residues 38–63; sequence VLMPLFYCIVFFVGLLGNALAFHIIR. Residues 64–83 lie on the Cytoplasmic side of the membrane; sequence PNVKKINSTTLYSANLVISD. A helical transmembrane segment spans residues 84 to 101; that stretch reads ILFTLSLPLRIIYYALGF. Residues 102-111 are Extracellular-facing; sequence HWPLGETLCK. A disulfide bond links Cys110 and Cys188. A helical transmembrane segment spans residues 112-133; the sequence is IVGLIFYINTYAGVNFMTCLSV. Over 134–155 the chain is Cytoplasmic; the sequence is DRFIAVVLPLRFARFRKVSNVR. Residues 156-174 form a helical membrane-spanning segment; the sequence is YICVGVWLLVLMQTLPLLS. Topologically, residues 175–199 are extracellular; it reads MPMTNEEPDGFITCMEYPNFEPVPN. Residues 200-222 traverse the membrane as a helical segment; the sequence is ISYILIGAVFLGYGVPVVTILVC. Topologically, residues 223-248 are cytoplasmic; it reads YSILCCKLRLAAKANQLTDKSGRSQK. The chain crosses the membrane as a helical span at residues 249–272; the sequence is AIGVICCVSLVFVVCFSPYHIDLL. Over 273 to 292 the chain is Extracellular; sequence QYMIRKLIYTPDCAELTAFQ. Residues 293–317 form a helical membrane-spanning segment; that stretch reads ISLHFTVCLMNLNSCLDPFIYFFAC. The Cytoplasmic segment spans residues 318-366; the sequence is KGYKTKVLKILKRQVSVSFSSAARTLPEGLSRDISDGNKIHLNSTRHKE.

It belongs to the G-protein coupled receptor 1 family.

It is found in the cell membrane. Its function is as follows. G-protein coupled receptor expressed in lymphocytes that acts as a chemotactic receptor for B-cells, T-cells, splenic dendritic cells, monocytes/macrophages and astrocytes. Receptor for oxysterol 7-alpha,25-dihydroxycholesterol (7-alpha,25-OHC) and other related oxysterols. Mediates cell positioning and movement of a number of cells by binding the 7-alpha,25-OHC ligand that forms a chemotactic gradient. Binding of 7-alpha,25-OHC mediates the correct localization of B-cells during humoral immune responses. This Salmo salar (Atlantic salmon) protein is G-protein coupled receptor 183 (gpr183).